A 513-amino-acid chain; its full sequence is ATP synthase subunit alpha (513 aa).

ATP is bound at residue 169–176 (GDRQTGKT).

This sequence belongs to the ATPase alpha/beta chains family. As to quaternary structure, F-type ATPases have 2 components, CF(1) - the catalytic core - and CF(0) - the membrane proton channel. CF(1) has five subunits: alpha(3), beta(3), gamma(1), delta(1), epsilon(1). CF(0) has three main subunits: a(1), b(2) and c(9-12). The alpha and beta chains form an alternating ring which encloses part of the gamma chain. CF(1) is attached to CF(0) by a central stalk formed by the gamma and epsilon chains, while a peripheral stalk is formed by the delta and b chains.

The protein localises to the cell inner membrane. The catalysed reaction is ATP + H2O + 4 H(+)(in) = ADP + phosphate + 5 H(+)(out). Functionally, produces ATP from ADP in the presence of a proton gradient across the membrane. The alpha chain is a regulatory subunit. This Cupriavidus metallidurans (strain ATCC 43123 / DSM 2839 / NBRC 102507 / CH34) (Ralstonia metallidurans) protein is ATP synthase subunit alpha.